We begin with the raw amino-acid sequence, 199 residues long: Interleukin-11 (199 aa).

Positions 1–21 (MNCVCRLVLVVLSLWPDTAVA) are cleaved as a signal peptide. The tract at residues 182-190 (HLTLDWAVR) is important for interaction with IL11RA and for the stimulation of cell proliferation.

This sequence belongs to the IL-6 superfamily. As to quaternary structure, interacts with IL11RA to associate with IL6ST, giving rise to a multimeric signaling complex.

It is found in the secreted. In terms of biological role, cytokine that stimulates the proliferation of hematopoietic stem cells and megakaryocyte progenitor cells and induces megakaryocyte maturation resulting in increased platelet production. Also promotes the proliferation of hepatocytes in response to liver damage. Binding to its receptor formed by IL6ST and IL11RA activates a signaling cascade that promotes cell proliferation. Signaling leads to the activation of intracellular protein kinases and the phosphorylation of STAT3. The interaction with the membrane-bound IL11RA and IL6ST stimulates 'classic signaling', whereas the binding of IL11 and soluble IL11RA to IL6ST stimulates 'trans-signaling'. This is Interleukin-11 (IL11) from Macaca fascicularis (Crab-eating macaque).